The sequence spans 223 residues: Deoxyribose-phosphate aldolase 1 (223 aa).

Catalysis depends on Asp-91, which acts as the Proton donor/acceptor. Residue Lys-154 is the Schiff-base intermediate with acetaldehyde of the active site. The Proton donor/acceptor role is filled by Lys-183.

Belongs to the DeoC/FbaB aldolase family. DeoC type 1 subfamily.

It is found in the cytoplasm. It catalyses the reaction 2-deoxy-D-ribose 5-phosphate = D-glyceraldehyde 3-phosphate + acetaldehyde. It participates in carbohydrate degradation; 2-deoxy-D-ribose 1-phosphate degradation; D-glyceraldehyde 3-phosphate and acetaldehyde from 2-deoxy-alpha-D-ribose 1-phosphate: step 2/2. In terms of biological role, catalyzes a reversible aldol reaction between acetaldehyde and D-glyceraldehyde 3-phosphate to generate 2-deoxy-D-ribose 5-phosphate. This chain is Deoxyribose-phosphate aldolase 1, found in Bacillus licheniformis (strain ATCC 14580 / DSM 13 / JCM 2505 / CCUG 7422 / NBRC 12200 / NCIMB 9375 / NCTC 10341 / NRRL NRS-1264 / Gibson 46).